A 443-amino-acid chain; its full sequence is MADVTFISSSIVRPQIINQEGREKIHLTPFDLNLLYVDYTQRGLLFPKPDPETHFISRLRTSLSSALDIYFPFAGRLNKVENHEDETVSFYINCDGSGAKFIHAVSDSVSVSDLLRPDGSVPDFFRIFYPMNGVKSIDGLSEPLLALQVTEMRDGVFIGFGYNHMVADGASIWNFFRTWSKICSNGQRENLQPLALKGLFVDGMDFPIHIPVSDTETSPPSRELSPTFKERVFHFTKRNISDLKAKVNGEIGLRDHKVSSLQAVSAHMWRSIIRHSGLNQEEKTRCFVAVDLRQRLNPPLDKECFGHVIYNSVVTTTVGELHDQGLGWAFLQINNMLRSLTNEDYRIYAENWVRNMKIQKSGLGSKMTRDSVIVSSSPRFEVYDNDFGWGKPIAVRAGPSNSISGKLVFFRGIEEGCIDVHAFLLPDVLVKLLADVEFLEKCG.

Active-site proton acceptor residues include His-164 and Asp-386.

The protein belongs to the plant acyltransferase family.

This is an uncharacterized protein from Arabidopsis thaliana (Mouse-ear cress).